The chain runs to 399 residues: Phosphoglycerate kinase (399 aa).

Substrate contacts are provided by residues 22-24 (DFN), R38, 61-64 (HLGR), R120, and R153. Residues K204, E326, and 352-355 (GGDT) each bind ATP.

It belongs to the phosphoglycerate kinase family. As to quaternary structure, monomer.

The protein localises to the cytoplasm. It carries out the reaction (2R)-3-phosphoglycerate + ATP = (2R)-3-phospho-glyceroyl phosphate + ADP. The protein operates within carbohydrate degradation; glycolysis; pyruvate from D-glyceraldehyde 3-phosphate: step 2/5. This is Phosphoglycerate kinase from Geobacter sp. (strain M21).